The chain runs to 244 residues: 7-cyano-7-deazaguanine synthase (244 aa).

17–27 lines the ATP pocket; it reads FSGGQDSTTCL. Cys-205, Cys-220, Cys-223, and Cys-226 together coordinate Zn(2+).

It belongs to the QueC family. Zn(2+) is required as a cofactor.

It carries out the reaction 7-carboxy-7-deazaguanine + NH4(+) + ATP = 7-cyano-7-deazaguanine + ADP + phosphate + H2O + H(+). It functions in the pathway purine metabolism; 7-cyano-7-deazaguanine biosynthesis. In terms of biological role, catalyzes the ATP-dependent conversion of 7-carboxy-7-deazaguanine (CDG) to 7-cyano-7-deazaguanine (preQ(0)). This is 7-cyano-7-deazaguanine synthase from Bordetella pertussis (strain Tohama I / ATCC BAA-589 / NCTC 13251).